The following is a 134-amino-acid chain: UPF0412 protein YaaI (134 aa).

Positions 1-23 (MKSVFTISASLAISLMLCCTAQA) are cleaved as a signal peptide.

Belongs to the UPF0412 family.

In Shigella dysenteriae serotype 1 (strain Sd197), this protein is UPF0412 protein YaaI.